The sequence spans 440 residues: Ribosomal protein uS12 methylthiotransferase RimO (440 aa).

An MTTase N-terminal domain is found at 6-116; sequence PKVGFVSLGC…VVTAVHEVVP (111 aa). [4Fe-4S] cluster contacts are provided by cysteine 15, cysteine 51, cysteine 80, cysteine 149, cysteine 153, and cysteine 156. Residues 135–373 enclose the Radical SAM core domain; sequence LTPRHYAYLK…MAHQQAISAA (239 aa). Positions 376–440 constitute a TRAM domain; the sequence is QLKVGKEIEV…DEYDLWAELV (65 aa).

The protein belongs to the methylthiotransferase family. RimO subfamily. Requires [4Fe-4S] cluster as cofactor.

The protein localises to the cytoplasm. The enzyme catalyses L-aspartate(89)-[ribosomal protein uS12]-hydrogen + (sulfur carrier)-SH + AH2 + 2 S-adenosyl-L-methionine = 3-methylsulfanyl-L-aspartate(89)-[ribosomal protein uS12]-hydrogen + (sulfur carrier)-H + 5'-deoxyadenosine + L-methionine + A + S-adenosyl-L-homocysteine + 2 H(+). Catalyzes the methylthiolation of an aspartic acid residue of ribosomal protein uS12. This is Ribosomal protein uS12 methylthiotransferase RimO from Pseudomonas aeruginosa (strain ATCC 15692 / DSM 22644 / CIP 104116 / JCM 14847 / LMG 12228 / 1C / PRS 101 / PAO1).